A 1030-amino-acid polypeptide reads, in one-letter code: ATPase MORC2A (1030 aa).

At alanine 2 the chain carries N-acetylalanine. ATP contacts are provided by residues asparagine 39, 87-89 (SAK), and 99-105 (QYGNGLK). Asparagine 39 serves as a coordination point for Mg(2+). Residues 285–362 (KTRAEQEVKK…KDAKQRALKE (78 aa)) adopt a coiled-coil conformation. ATP is bound at residue lysine 427. The CW-type zinc-finger motif lies at 490–544 (AMEIPTTIQCDLCLKWRTLPFQLSSVETDYPDTWVCSMNPDPEQDRCEASEQKQK). The Zn(2+) site is built by cysteine 499, cysteine 502, cysteine 525, and cysteine 536. The segment at 530 to 791 (DPEQDRCEAS…HPAELRKAQK (262 aa)) is disordered. Composition is skewed to basic and acidic residues over residues 532–543 (EQDRCEASEQKQ) and 550–577 (LKKDPKTQEEKQKQLTEKIRQQQEKLEA). Residues 555–583 (KTQEEKQKQLTEKIRQQQEKLEALQKTTP) are a coiled coil. Position 582 is a phosphothreonine (threonine 582). Position 614 is a phosphoserine (serine 614). Over residues 629 to 646 (PSIQTPRPSTQLRKTSVI) the composition is skewed to polar residues. Residues lysine 650 and lysine 702 each participate in a glycyl lysine isopeptide (Lys-Gly) (interchain with G-Cter in SUMO2) cross-link. The segment covering 693 to 702 (PPLSLIPSSK) has biased composition (low complexity). Serine 703 is modified (phosphoserine). Residue lysine 714 forms a Glycyl lysine isopeptide (Lys-Gly) (interchain with G-Cter in SUMO2) linkage. Serine 728 carries the post-translational modification Phosphoserine. A Phosphothreonine modification is found at threonine 731. Phosphoserine occurs at positions 737 and 741. Residues 738-775 (LAVSDEEEAEEEAEKRRERCKRGKLAVKEEKKEANELS) adopt a coiled-coil conformation. Residues 763–772 (AVKEEKKEAN) are compositionally biased toward basic and acidic residues. Lysine 765 participates in a covalent cross-link: Glycyl lysine isopeptide (Lys-Gly) (interchain with G-Cter in SUMO2). Residues serine 775 and serine 777 each carry the phosphoserine modification. The segment covering 779–791 (GEDHPAELRKAQK) has biased composition (basic and acidic residues). Lysine 817 participates in a covalent cross-link: Glycyl lysine isopeptide (Lys-Gly) (interchain with G-Cter in SUMO2). Threonine 834 carries the post-translational modification Phosphothreonine. A compositionally biased stretch (basic and acidic residues) spans 837–849 (DRWVEKGSEDVRL). 2 disordered regions span residues 837 to 874 (DRWVEKGSEDVRLMKPPSPEHQSPDTQQEGGEEEEAMV) and 882 to 901 (PEPSTSDGLPIEPDTTATSP). Phosphoserine is present on residues serine 854 and serine 859. The segment covering 856–865 (EHQSPDTQQE) has biased composition (polar residues). Lysine 930 participates in a covalent cross-link: Glycyl lysine isopeptide (Lys-Gly) (interchain with G-Cter in SUMO2). A coiled-coil region spans residues 966–1011 (RADSRAKASEESLRTSEKKLRETEEKLQKLRTNIVALLQKVQEDID).

As to quaternary structure, homodimerizes upon ATP-binding and dissociate upon ATP hydrolysis; homodimerization is required for gene silencing. Binds histone H3 independently of the methylation status at 'Lys-9'. Interacts with HDAC4. Interacts with FAM208A/TASOR and MPHOSPH8; the interactions associate MORC2 with the HUSH complex which recruits MORC2 to heterochromatic loci. Interacts with Morc2b. Phosphorylated by PAK1 at Ser-737 upon DNA damage. Phosphorylation is required for ATPase activity and recruitment to damaged chromatin. As to expression, expressed in the axons and Schwann cells of peripheral nerves. Expressed in testes.

Its subcellular location is the nucleus. The protein resides in the cytoplasm. It localises to the cytosol. It is found in the chromosome. The protein localises to the nucleus matrix. The catalysed reaction is ATP + H2O = ADP + phosphate + H(+). With respect to regulation, ATPase activity is dependent of phosphorylation by PAK1 and presence of DNA. Functionally, essential for epigenetic silencing by the HUSH complex. Recruited by HUSH to target site in heterochromatin, the ATPase activity and homodimerization are critical for HUSH-mediated silencing. Represses germ cell-related genes and L1 retrotransposons in collaboration with SETDB1 and the HUSH complex, the silencing is dependent of repressive epigenetic modifications, such as H3K9me3 mark. Silencing events often occur within introns of transcriptionally active genes, and lead to the down-regulation of host gene expression. During DNA damage response, regulates chromatin remodeling through ATP hydrolysis. During DNA damage response, may regulate chromatin remodeling through ATP hydrolysis. This Mus musculus (Mouse) protein is ATPase MORC2A.